A 341-amino-acid polypeptide reads, in one-letter code: Hyaluronan and proteoglycan link protein 2 (341 aa).

A signal peptide spans 1 to 27; the sequence is MPSWIPLPAFCCLLLPWAFTVFHKTLG. Residues 35 to 143 enclose the Ig-like V-type domain; the sequence is PHYLLPPIHE…GIEDESVALT (109 aa). Disulfide bonds link Cys58–Cys129, Cys171–Cys241, Cys195–Cys216, Cys266–Cys337, and Cys291–Cys312. Link domains lie at 149–243 and 246–339; these read VVFP…FCFT and LAGQ…YCYA.

The protein belongs to the HAPLN family. As to expression, brain.

It is found in the secreted. It localises to the extracellular space. The protein resides in the extracellular matrix. Mediates a firm binding of versican V2 to hyaluronic acid. May play a pivotal role in the formation of the hyaluronan-associated matrix in the central nervous system (CNS) which facilitates neuronal conduction and general structural stabilization. Binds to hyaluronic acid. The polypeptide is Hyaluronan and proteoglycan link protein 2 (Hapln2) (Rattus norvegicus (Rat)).